Here is a 90-residue protein sequence, read N- to C-terminus: Small ribosomal subunit protein uS15 (90 aa).

It belongs to the universal ribosomal protein uS15 family. As to quaternary structure, part of the 30S ribosomal subunit. Forms a bridge to the 50S subunit in the 70S ribosome, contacting the 23S rRNA.

Functionally, one of the primary rRNA binding proteins, it binds directly to 16S rRNA where it helps nucleate assembly of the platform of the 30S subunit by binding and bridging several RNA helices of the 16S rRNA. Its function is as follows. Forms an intersubunit bridge (bridge B4) with the 23S rRNA of the 50S subunit in the ribosome. The protein is Small ribosomal subunit protein uS15 of Paraburkholderia xenovorans (strain LB400).